Here is a 270-residue protein sequence, read N- to C-terminus: Metallo-beta-lactamase type 2 (270 aa).

Residues 1–28 (MELPNIMHPVAKLSTALAAALMLSGCMP) form the signal peptide. His-120, His-122, Asp-124, His-189, and Cys-208 together coordinate Zn(2+). Residues Lys-211 and Asn-220 each coordinate substrate. Residue His-250 coordinates Zn(2+).

The protein belongs to the metallo-beta-lactamase superfamily. Class-B beta-lactamase family. As to quaternary structure, monomer. The cofactor is Zn(2+).

It localises to the periplasm. The catalysed reaction is a beta-lactam + H2O = a substituted beta-amino acid. Its activity is regulated as follows. Inhibits by captopril, thiorphan, dimercaprol and tiopronin. This enzyme is not susceptible to inactivation by the beta-lactamase-blocking agents clavulanic acid. Functionally, confers resistance to the different beta-lactams antibiotics (penicillin, cephalosporin and carbapenem) via the hydrolysis of the beta-lactam ring. Does not confer resistance to the polymixin colistin or the fluoroquinolone ciprofloxacin. The protein is Metallo-beta-lactamase type 2 of Klebsiella pneumoniae.